The sequence spans 273 residues: Putative ankyrin repeat protein RBE_0317 (273 aa).

ANK repeat units lie at residues 31–60, 93–123, 127–157, 161–191, and 195–225; these read LGKE…DFYS, NGNT…EVNT, GGNS…NVNE, YGDT…DVNE, and QGET…DTKQ.

This is Putative ankyrin repeat protein RBE_0317 from Rickettsia bellii (strain RML369-C).